The following is a 116-amino-acid chain: Small ribosomal subunit protein bS16 (116 aa).

Residues 88 to 116 are disordered; sequence RNNPKAAVPGKRMAELAKKKAERAAASAE. Positions 99–110 are enriched in basic and acidic residues; it reads RMAELAKKKAER.

Belongs to the bacterial ribosomal protein bS16 family.

The sequence is that of Small ribosomal subunit protein bS16 from Cereibacter sphaeroides (strain ATCC 17025 / ATH 2.4.3) (Rhodobacter sphaeroides).